A 434-amino-acid polypeptide reads, in one-letter code: Gamma-glutamyl phosphate reductase (434 aa).

This sequence belongs to the gamma-glutamyl phosphate reductase family.

It is found in the cytoplasm. The catalysed reaction is L-glutamate 5-semialdehyde + phosphate + NADP(+) = L-glutamyl 5-phosphate + NADPH + H(+). It participates in amino-acid biosynthesis; L-proline biosynthesis; L-glutamate 5-semialdehyde from L-glutamate: step 2/2. Functionally, catalyzes the NADPH-dependent reduction of L-glutamate 5-phosphate into L-glutamate 5-semialdehyde and phosphate. The product spontaneously undergoes cyclization to form 1-pyrroline-5-carboxylate. The chain is Gamma-glutamyl phosphate reductase from Nostoc sp. (strain PCC 7120 / SAG 25.82 / UTEX 2576).